A 258-amino-acid polypeptide reads, in one-letter code: Octanoyltransferase (258 aa).

Residues 42 to 226 (NLGADTLLLL…AVVAALDGAL (185 aa)) form the BPL/LPL catalytic domain. Substrate contacts are provided by residues 80 to 87 (RGGKITWH), 156 to 158 (AIG), and 169 to 171 (GFS). C187 serves as the catalytic Acyl-thioester intermediate.

Belongs to the LipB family.

It localises to the cytoplasm. It carries out the reaction octanoyl-[ACP] + L-lysyl-[protein] = N(6)-octanoyl-L-lysyl-[protein] + holo-[ACP] + H(+). The protein operates within protein modification; protein lipoylation via endogenous pathway; protein N(6)-(lipoyl)lysine from octanoyl-[acyl-carrier-protein]: step 1/2. In terms of biological role, catalyzes the transfer of endogenously produced octanoic acid from octanoyl-acyl-carrier-protein onto the lipoyl domains of lipoate-dependent enzymes. Lipoyl-ACP can also act as a substrate although octanoyl-ACP is likely to be the physiological substrate. This chain is Octanoyltransferase, found in Rhodococcus opacus (strain B4).